The primary structure comprises 639 residues: ADP-ribosylation factor-binding protein GGA1 (639 aa).

Methionine 1 is subject to N-acetylmethionine. A VHS domain is found at 17–147 (ATNPLNKELD…MLKKQGIVKS (131 aa)). The interval 114–274 (KILELLYSWT…RLASDTEDND (161 aa)) is interaction with ARF3. In terms of domain architecture, GAT spans 171 to 299 (DEEKSKMLAR…VINLYKQLVR (129 aa)). Serine 185 bears the Phosphoserine mark. A unstructured hinge region spans residues 300–509 (GEEVNGDATA…ITVPLESIKP (210 aa)). Disordered regions lie at residues 320–421 (LDLS…SGLD) and 434–492 (SLPP…QPVP). Serine 355 is subject to Phosphoserine; by CK2. Positions 358-362 (DDELM) match the Autoinhibitory motif. A compositionally biased stretch (polar residues) spans 381-390 (GWNSFQSSDA). The residue at position 418 (serine 418) is a Phosphoserine. Low complexity predominate over residues 462–480 (SSSCSSPSSSATSLLHTVS). Positions 481 to 490 (PEPPRPPQQP) are enriched in pro residues. A GAE domain is found at 510-631 (SNILPVTVYD…NEMGDVDQFP (122 aa)).

This sequence belongs to the GGA protein family. Monomer. Interacts with GGA2 and GGA3. Binds to clathrin and activated ARFs, including ARF1, ARF5 and ARF6. Interacts with RABEP1. Interacts with RABGEF1. Interacts with the type-I membrane proteins LRP3, M6PR/CD-MPR and IGF2R/CI-MPR. Interacts (via N-terminal VHS domain) with SORL1/sorLA and SORT1 (via C-terminal cytosolic domain). Interacts with EPN4. Interacts with CCDC91. Interacts with HEATR5B/p200a. Interacts with SYNRG/gamma-synergin. Interacts (via GAE doamin) with NECAP1 and NECAP2. Interacts (via GAE domain) with AFTPH/aftiphilin. Interacts with TSG101 and UBC. Interacts with RNF11. Interacts (via VHS domain) with BACE1 (via DXXLL motif); the interaction highly increases when BACE1 is phosphorylated at 'Ser-498'. Interacts with CNST. Interacts with ADRA2B. Interacts with ARL3; the interaction recruits, in collaboration with RABEP1, PKD1:PKD2 complex to trans-Golgi network and is required for ciliary targeting. Post-translationally, phosphorylated by CK2 and dephosphorylated by PP2A. Phosphorylation of GGA1 allows the internal DXXLL motif to bind the VHS domain and to inhibit the recognition of cargo signals. Ubiquitinated. Ubiquitously expressed.

Its subcellular location is the golgi apparatus. It is found in the trans-Golgi network membrane. The protein localises to the endosome membrane. The protein resides in the early endosome membrane. Plays a role in protein sorting and trafficking between the trans-Golgi network (TGN) and endosomes. Mediates the ARF-dependent recruitment of clathrin to the TGN and binds ubiquitinated proteins and membrane cargo molecules with a cytosolic acidic cluster-dileucine (DXXLL) motif. Mediates export of the GPCR receptor ADRA2B to the cell surface. Required for targeting PKD1:PKD2 complex from the trans-Golgi network to the cilium membrane. Regulates retrograde transport of proteins such as phosphorylated form of BACE1 from endosomes to the trans-Golgi network. The polypeptide is ADP-ribosylation factor-binding protein GGA1 (GGA1) (Homo sapiens (Human)).